Consider the following 28-residue polypeptide: Dermaseptin-2.2TR (28 aa).

In terms of tissue distribution, expressed by the skin glands.

The protein resides in the secreted. Its function is as follows. Has antimicrobial activity. The protein is Dermaseptin-2.2TR of Phyllomedusa trinitatis (Trinidad leaf frog).